Here is a 358-residue protein sequence, read N- to C-terminus: Endoplasmic reticulum junction formation protein lunapark-B (358 aa).

Residues 1-45 (MGAIISRWKTKLTTVEQLENIDKEIKQLEEFRAKNQRLQKLWVGR) are Cytoplasmic-facing. A coiled-coil region spans residues 9–41 (KTKLTTVEQLENIDKEIKQLEEFRAKNQRLQKL). The helical transmembrane segment at 46–66 (LLLYSSALYLLISLFVYLLYL) threads the bilayer. Residues 67 to 69 (PEQ) lie on the Lumenal side of the membrane. A helical transmembrane segment spans residues 70 to 90 (WLLRLAMALPFFIYPVLVWFI). Residues 91 to 358 (RRFLIFLFSK…SRGMDKHGRA (268 aa)) lie on the Cytoplasmic side of the membrane. Residues 99–128 (SKRSERNNDKLEDLKATKKKILEEVMETET) are a coiled coil. The C4-type; plays a role in ER morphology zinc-finger motif lies at 275–300 (CQQCFSHNGMALKEEFEYLAFRCAYC). A disordered region spans residues 320-358 (NFEKRLRAESSTPGPAPHSATDTEESAPPSRGMDKHGRA).

It belongs to the lunapark family. In terms of assembly, homodimer; homodimerization requires the C4-type zinc finger motif and decreases during mitosis in a phosphorylation-dependent manner. In terms of processing, phosphorylated. Phosphorylation occurs during interphase. Phosphorylation also occurs during mitosis; these phosphorylations reduce both its homodimerization and the ER three-way tubular junction formation.

The protein localises to the endoplasmic reticulum membrane. Endoplasmic reticulum (ER)-shaping membrane protein that plays a role in determining ER morphology. Involved in the stabilization of nascent three-way ER tubular junctions within the ER network. May also play a role as a curvature-stabilizing protein within three-way ER tubular junction network. This chain is Endoplasmic reticulum junction formation protein lunapark-B (lnpkb), found in Takifugu rubripes (Japanese pufferfish).